The following is a 140-amino-acid chain: MAIERTFSMIKPDATKRNLTGAITKMLEDAGLRVVASKRVWMSRREAEGFYAVHKDRPFFGELVEGMTSGPTIVQVLEGEGAILKNREIMGATNPANADEGTIRKVHALSIGENSVHGSDAPETAAQEIKYWFSDTEIVG.

6 residues coordinate ATP: lysine 11, phenylalanine 59, arginine 87, threonine 93, arginine 104, and asparagine 114. Histidine 117 acts as the Pros-phosphohistidine intermediate in catalysis.

The protein belongs to the NDK family. In terms of assembly, homotetramer. Mg(2+) serves as cofactor.

The protein resides in the cytoplasm. The catalysed reaction is a 2'-deoxyribonucleoside 5'-diphosphate + ATP = a 2'-deoxyribonucleoside 5'-triphosphate + ADP. The enzyme catalyses a ribonucleoside 5'-diphosphate + ATP = a ribonucleoside 5'-triphosphate + ADP. Its function is as follows. Major role in the synthesis of nucleoside triphosphates other than ATP. The ATP gamma phosphate is transferred to the NDP beta phosphate via a ping-pong mechanism, using a phosphorylated active-site intermediate. This is Nucleoside diphosphate kinase from Rhizobium johnstonii (strain DSM 114642 / LMG 32736 / 3841) (Rhizobium leguminosarum bv. viciae).